Reading from the N-terminus, the 625-residue chain is MAU2 chromatid cohesion factor homolog (625 aa).

TPR repeat units lie at residues 96-129 (FDTA…SQNN), 451-484 (GGFY…ANAE), and 491-524 (SCSL…ASKI). Positions 600–611 (TVPTTETSTSAL) are enriched in polar residues. Residues 600–625 (TVPTTETSTSALQQPQQPAAQFGQFY) are disordered. Low complexity predominate over residues 612 to 625 (QQPQQPAAQFGQFY).

Belongs to the SCC4/mau-2 family. In terms of assembly, interacts with Nipped-B to form the cohesin loading complex.

It localises to the nucleus. It is found in the nucleoplasm. Required for association of the cohesin complex with chromatin during interphase. Plays a role in sister chromatid cohesion and normal progression through prometaphase. The protein is MAU2 chromatid cohesion factor homolog of Drosophila mojavensis (Fruit fly).